A 92-amino-acid chain; its full sequence is Small ribosomal subunit protein uS19 (92 aa).

This sequence belongs to the universal ribosomal protein uS19 family.

Functionally, protein S19 forms a complex with S13 that binds strongly to the 16S ribosomal RNA. This chain is Small ribosomal subunit protein uS19, found in Malacoplasma penetrans (strain HF-2) (Mycoplasma penetrans).